An 874-amino-acid polypeptide reads, in one-letter code: Bifunctional uridylyltransferase/uridylyl-removing enzyme (874 aa).

The segment at 1–332 is uridylyltransferase; the sequence is MTLQSPLTFR…NGGASEDAEI (332 aa). Residues 333 to 692 are uridylyl-removing; the sequence is IDEDFQRRGA…ISKKATRGGT (360 aa). Residues 451–573 enclose the HD domain; sequence VDEHSIRLLK…VRDEEYLEYL (123 aa). ACT domains follow at residues 693 to 777 and 800 to 874; these read EVFV…RTPN and LMEF…SVSA.

Belongs to the GlnD family. Mg(2+) is required as a cofactor.

It catalyses the reaction [protein-PII]-L-tyrosine + UTP = [protein-PII]-uridylyl-L-tyrosine + diphosphate. The catalysed reaction is [protein-PII]-uridylyl-L-tyrosine + H2O = [protein-PII]-L-tyrosine + UMP + H(+). With respect to regulation, uridylyltransferase (UTase) activity is inhibited by glutamine, while glutamine activates uridylyl-removing (UR) activity. Functionally, modifies, by uridylylation and deuridylylation, the PII regulatory proteins (GlnB and homologs), in response to the nitrogen status of the cell that GlnD senses through the glutamine level. Under low glutamine levels, catalyzes the conversion of the PII proteins and UTP to PII-UMP and PPi, while under higher glutamine levels, GlnD hydrolyzes PII-UMP to PII and UMP (deuridylylation). Thus, controls uridylylation state and activity of the PII proteins, and plays an important role in the regulation of nitrogen assimilation and metabolism. The sequence is that of Bifunctional uridylyltransferase/uridylyl-removing enzyme from Vibrio campbellii (strain ATCC BAA-1116).